Here is a 288-residue protein sequence, read N- to C-terminus: Bifunctional protein FolD (288 aa).

Residues 165-167, serine 190, and isoleucine 231 contribute to the NADP(+) site; that span reads GRS.

This sequence belongs to the tetrahydrofolate dehydrogenase/cyclohydrolase family. Homodimer.

It catalyses the reaction (6R)-5,10-methylene-5,6,7,8-tetrahydrofolate + NADP(+) = (6R)-5,10-methenyltetrahydrofolate + NADPH. The catalysed reaction is (6R)-5,10-methenyltetrahydrofolate + H2O = (6R)-10-formyltetrahydrofolate + H(+). It functions in the pathway one-carbon metabolism; tetrahydrofolate interconversion. In terms of biological role, catalyzes the oxidation of 5,10-methylenetetrahydrofolate to 5,10-methenyltetrahydrofolate and then the hydrolysis of 5,10-methenyltetrahydrofolate to 10-formyltetrahydrofolate. The sequence is that of Bifunctional protein FolD from Nitrosospira multiformis (strain ATCC 25196 / NCIMB 11849 / C 71).